The primary structure comprises 226 residues: 7-cyano-7-deazaguanine synthase (226 aa).

9-19 (YSGGLDSTTCL) contributes to the ATP binding site. Residues cysteine 189, cysteine 199, cysteine 202, and cysteine 205 each contribute to the Zn(2+) site.

Belongs to the QueC family. It depends on Zn(2+) as a cofactor.

The enzyme catalyses 7-carboxy-7-deazaguanine + NH4(+) + ATP = 7-cyano-7-deazaguanine + ADP + phosphate + H2O + H(+). The protein operates within purine metabolism; 7-cyano-7-deazaguanine biosynthesis. Its function is as follows. Catalyzes the ATP-dependent conversion of 7-carboxy-7-deazaguanine (CDG) to 7-cyano-7-deazaguanine (preQ(0)). The polypeptide is 7-cyano-7-deazaguanine synthase (Pelobacter propionicus (strain DSM 2379 / NBRC 103807 / OttBd1)).